The sequence spans 464 residues: MVDSKRMDSGSKDMINDLPDALLCHVLSYLTTKEAASTSLLSRRWRYLLAFVPNLEFDDSAYLHRDKRVKNPLHEKGLVGFVLTVDDKRKKLSTSFPDFVDRILDLQGNSPLDKFSLKMVDDHDPVDPDCVAPWIHKVLVRGVSDLHLVIDMNEWTSLPAKIFLTETLVKLTLKIRDGPPIDVKHVHLPKLKTLHLESVMFDEEDIGFSKLLSGCPELEELVLHHIWSCVWTSCSVSVATLKRLTFCCNNMKFCGMHEENPNNVSFDTPNLVYLEYAEVIANNYPKVNFDSLVEAKIDIWMTNDQLDEVRIRDIYEKNVMVGNATDLIVGIRNVRVLCLSADTLEVLTYCCKQIPIFNNLTHVTIQSTPKVGWKSLLKLLKNSPKLQTLVFQGLLHRDTKEEGVAIIKIEKQIEKVKHFLETMPHLEQLVLHYDSSIDGDMKQLLMLSSLASPKCKVQLIPLVT.

Positions 12 to 60 constitute an F-box domain; the sequence is KDMINDLPDALLCHVLSYLTTKEAASTSLLSRRWRYLLAFVPNLEFDDS. LRR repeat units follow at residues 172–198, 200–225, 233–258, 336–367, 368–393, and 408–433; these read TLKI…HLES, MFDE…VLHH, SCSV…GMHE, VLCL…TIQS, TPKV…VFQG, and KIEK…VLHY.

This Arabidopsis thaliana (Mouse-ear cress) protein is Putative F-box/LRR-repeat protein At3g59160.